Reading from the N-terminus, the 563-residue chain is Serine/threonine-protein kinase WNK8 (563 aa).

Residues 29 to 286 (IRYDDVLGRG…ALELSKDPFL (258 aa)) enclose the Protein kinase domain. Residues 109–112 (TELF) and K159 contribute to the ATP site. Catalysis depends on D176, which acts as the Proton acceptor. Positions 426 to 436 (TSSHHNQNSPR) are enriched in polar residues. The segment at 426–459 (TSSHHNQNSPRLTHEDHEAANQQTVNSKDEEAAG) is disordered. Residue S509 is modified to Phosphoserine.

This sequence belongs to the protein kinase superfamily. Ser/Thr protein kinase family. WNK subfamily. In terms of assembly, interacts with RGS1 and GB1, but not with GPA1. The association with RGS1 at the plasma membrane is triggered by induction of glucose. Binds to EDM2 in nucleus. Autophosphorylated.

The protein resides in the nucleus. The catalysed reaction is L-seryl-[protein] + ATP = O-phospho-L-seryl-[protein] + ADP + H(+). It catalyses the reaction L-threonyl-[protein] + ATP = O-phospho-L-threonyl-[protein] + ADP + H(+). In terms of biological role, regulates flowering time by modulating the photoperiod pathway. Phosphorylates the vacuolar ATPase subunit C (VATC) and RGS1. Regulates EDM2 that, in turn, modulates development processes. The polypeptide is Serine/threonine-protein kinase WNK8 (WNK8) (Arabidopsis thaliana (Mouse-ear cress)).